Here is a 151-residue protein sequence, read N- to C-terminus: Nucleoside diphosphate kinase (151 aa).

Lysine 11, phenylalanine 59, arginine 87, threonine 93, arginine 104, and asparagine 114 together coordinate ATP. Histidine 117 acts as the Pros-phosphohistidine intermediate in catalysis.

The protein belongs to the NDK family. Mg(2+) is required as a cofactor.

It carries out the reaction a 2'-deoxyribonucleoside 5'-diphosphate + ATP = a 2'-deoxyribonucleoside 5'-triphosphate + ADP. The enzyme catalyses a ribonucleoside 5'-diphosphate + ATP = a ribonucleoside 5'-triphosphate + ADP. Its function is as follows. Major role in the synthesis of nucleoside triphosphates other than ATP. The ATP gamma phosphate is transferred to the NDP beta phosphate via a ping-pong mechanism, using a phosphorylated active-site intermediate. The protein is Nucleoside diphosphate kinase (NDK1) of Eremothecium gossypii (strain ATCC 10895 / CBS 109.51 / FGSC 9923 / NRRL Y-1056) (Yeast).